The following is a 187-amino-acid chain: MKNLILLFLLISIINLIQSLPLDSVINFYVNSTVGSCKGKQLEVSLDVCNNGCSNSFKITSSKDNVNNYNFTSYIETDDKQCLTNNYTINLFNCSIDNAALVGPYSVKCIFKETPSPSNSSNPSPSPNTTSSSSLSSSSLNSNEPNQTTKPPKTNEPQKNNSTSNIPNFFAIFGFLVLIIFILGDKI.

Positions 1-19 (MKNLILLFLLISIINLIQS) are cleaved as a signal peptide. Asparagine 31, asparagine 70, asparagine 86, asparagine 93, asparagine 119, asparagine 128, asparagine 146, asparagine 160, and asparagine 161 each carry an N-linked (GlcNAc...) asparagine glycan. The span at 115–146 (PSPSNSSNPSPSPNTTSSSSLSSSSLNSNEPN) shows a compositional bias: low complexity. Residues 115–161 (PSPSNSSNPSPSPNTTSSSSLSSSSLNSNEPNQTTKPPKTNEPQKNN) form a disordered region. The span at 147–161 (QTTKPPKTNEPQKNN) shows a compositional bias: polar residues. The GPI-like-anchor amidated asparagine moiety is linked to residue asparagine 161. Residues 162 to 187 (STSNIPNFFAIFGFLVLIIFILGDKI) constitute a propeptide, removed in mature form.

This sequence belongs to the ponticulin family. The GPI-like-anchor contains a phosphoceramide group, rather than a phosphatidyl group.

It localises to the cell membrane. Its function is as follows. Binds F-actin and nucleates actin assembly. In Dictyostelium discoideum (Social amoeba), this protein is Ponticulin-like protein K (ponK).